Consider the following 561-residue polypeptide: ATP-dependent RNA helicase MRH4, mitochondrial (561 aa).

The N-terminal 26 residues, 1–26 (MSLFFKPVISPQWSFPVLLKIGVRSY), are a transit peptide targeting the mitochondrion. Residues 29–72 (GPRTKHKGNSPLASVPTGSSNKNRKQKAKGKKGNKKNDPDQAFN) form a disordered region. A compositionally biased stretch (basic residues) spans 50–62 (KNRKQKAKGKKGN). Positions 98–129 (SNFDQLLILPPVRDAVKEIISKESLKLQDSRK) match the Q motif motif. The Helicase ATP-binding domain occupies 131 to 319 (TSENIIPSPI…NINHLIFCSA (189 aa)). 144–151 (AIKRISKN) contributes to the ATP binding site. A DEAD box motif is present at residues 267 to 270 (SIRM). A Helicase C-terminal domain is found at 350-539 (ALDFKVINSA…KQGGRVFMLT (190 aa)).

This sequence belongs to the DEAD box helicase family. MRH4 subfamily.

The protein localises to the mitochondrion. The catalysed reaction is ATP + H2O = ADP + phosphate + H(+). ATP-binding RNA helicase involved in mitochondrial RNA metabolism. Required for maintenance of mitochondrial DNA. This Saccharomyces cerevisiae (strain YJM789) (Baker's yeast) protein is ATP-dependent RNA helicase MRH4, mitochondrial (MRH4).